A 395-amino-acid polypeptide reads, in one-letter code: Endophilin-B2 (395 aa).

Position 1 is an N-acetylmethionine (methionine 1). The segment at 1 to 27 (MDFNMKKLASDAGIFFTRAVQFTEEKF) is membrane-binding amphipathic helix. Serine 10 carries the post-translational modification Phosphoserine. The BAR domain occupies 24–287 (EEKFGQAEKT…LGRFPGTFVG (264 aa)). Coiled coils occupy residues 116 to 132 (IKVAEAEKQLGAAERDF) and 206 to 240 (ASALWNDEVDKAEQELRVAQTEFDRQAEVTRLLLE). The 61-residue stretch at 335-395 (SGTRKARVLY…VPVTYLELLS (61 aa)) folds into the SH3 domain. Serine 395 carries the phosphoserine modification.

The protein belongs to the endophilin family. Homodimer, and heterodimer with SH3GLB1. Detected in skeletal muscle, adipocyte, brain, lung, colon and mammary gland.

It localises to the cytoplasm. The sequence is that of Endophilin-B2 (SH3GLB2) from Homo sapiens (Human).